A 318-amino-acid chain; its full sequence is DNA repair nuclease/redox regulator APEX1 (318 aa).

The tract at residues M1–S59 is disordered. Positions P2 to N33 are necessary for interaction with YBX1, binding to RNA, association together with NPM1 to rRNA, endoribonuclease activity on abasic RNA and localization in the nucleoli. N6-acetyllysine; by EP300 occurs at positions 6 and 7. Positions G8–D13 match the Nuclear localization signal (NLS) motif. Residues E16–V38 are compositionally biased toward basic and acidic residues. The necessary for interaction with NPM1 and for efficient rRNA binding stretch occupies residues A23–N33. K27, K31, K32, and K35 each carry N6-acetyllysine. S54 is subject to Phosphoserine. A Nuclear export signal (NES) motif is present at residues I64 to G80. S-nitrosocysteine; alternate is present on C65. The cysteines at positions 65 and 93 are disulfide-linked. D70 serves as a coordination point for Mg(2+). C93 is subject to S-nitrosocysteine; alternate. E96 serves as a coordination point for Mg(2+). Y171 is a catalytic residue. N6-acetyllysine is present on K197. Residues D210 and N212 each coordinate Mg(2+). D210 (proton donor/acceptor) is an active-site residue. T233 bears the Phosphothreonine; by CDK5 mark. Positions Q289–L318 are mitochondrial targeting sequence (MTS). D308 contributes to the Mg(2+) binding site. Residue C310 is modified to S-nitrosocysteine.

Belongs to the DNA repair enzymes AP/ExoA family. In terms of assembly, monomer. Homodimer; disulfide-linked. Component of the SET complex, composed of at least APEX1, SET, ANP32A, HMGB2, NME1 and TREX1. Associates with the dimer XRCC5/XRCC6 in a DNA-dependent manner. Interacts with SIRT1; the interaction is increased in the context of genotoxic stress. Interacts with HDAC1, HDAC2 and HDAC3; the interactions are not dependent on the APEX1 acetylation status. Interacts with XRCC1; the interaction is induced by SIRT1 and increased with the APEX1 acetylated form. Interacts with NPM1 (via N-terminal domain); the interaction is RNA-dependent and decreases in hydrogen peroxide-damaged cells. Interacts (via N-terminus) with YBX1 (via C-terminus); the interaction is increased in presence of APEX1 acetylated at Lys-6 and Lys-7. Interacts with HNRNPL; the interaction is DNA-dependent. Interacts (via N-terminus) with KPNA1 and KPNA2. Interacts with TXN; the interaction stimulates the FOS/JUN AP-1 complex DNA-binding activity in a redox-dependent manner. Interacts with GZMA, KRT8, MDM2, POLB, PRDX6, PRPF19, RPLP0, TOMM20 and WDR77. Binds to CDK5. Mg(2+) serves as cofactor. It depends on Mn(2+) as a cofactor. Phosphorylated. Phosphorylation by kinase PKC or casein kinase CK2 results in enhanced redox activity that stimulates binding of the FOS/JUN AP-1 complex to its cognate binding site. AP-endodeoxyribonuclease activity is not affected by CK2-mediated phosphorylation. Phosphorylation of Thr-233 by CDK5 in response to MPP(+)/MPTP (1-methyl-4-phenylpyridinium) reduces AP-endodeoxyribonuclease activity resulting in accumulation of DNA damage and contributing to neuronal death. Post-translationally, acetylated on Lys-6 and Lys-7. Acetylation is increased by the transcriptional coactivator EP300 acetyltransferase, genotoxic agents like H(2)O(2) and methyl methanesulfonate (MMS). Acetylation increases its binding affinity to the negative calcium response element (nCaRE) DNA promoter. The acetylated form induces a stronger binding of YBX1 to the Y-box sequence in the MDR1 promoter than the unacetylated form. Deacetylated on lysines. Lys-6 and Lys-7 are deacetylated by SIRT1. In terms of processing, cleaved at Lys-31 by granzyme A to create the mitochondrial form; leading in reduction of binding to DNA, AP endodeoxyribonuclease activity, redox activation of transcription factors and to enhanced cell death. Cleaved by granzyme K; leading to intracellular ROS accumulation and enhanced cell death after oxidative stress. Cys-69 and Cys-93 are nitrosylated in response to nitric oxide (NO) and lead to the exposure of the nuclear export signal (NES). Post-translationally, ubiquitinated by MDM2; leading to translocation to the cytoplasm and proteasomal degradation. In terms of tissue distribution, the mitochondrial form is expressed in liver (at protein level). Thymus.

It is found in the nucleus. The protein localises to the nucleolus. Its subcellular location is the nucleus speckle. The protein resides in the endoplasmic reticulum. It localises to the cytoplasm. It is found in the mitochondrion. The enzyme catalyses Exonucleolytic cleavage in the 3'- to 5'-direction to yield nucleoside 5'-phosphates.. With respect to regulation, NPM1 stimulates endodeoxyribonuclease activity on double-stranded DNA with AP sites, but inhibits endoribonuclease activity on single-stranded RNA containing AP sites. Its function is as follows. Multifunctional protein that plays a central role in the cellular response to oxidative stress. The two major activities of APEX1 are DNA repair and redox regulation of transcriptional factors. Functions as an apurinic/apyrimidinic (AP) endodeoxyribonuclease in the DNA base excision repair (BER) pathway of DNA lesions induced by oxidative and alkylating agents. Initiates repair of AP sites in DNA by catalyzing hydrolytic incision of the phosphodiester backbone immediately adjacent to the damage, generating a single-strand break with 5'-deoxyribose phosphate and 3'-hydroxyl ends. Also incises at AP sites in the DNA strand of DNA/RNA hybrids, single-stranded DNA regions of R-loop structures, and single-stranded RNA molecules. Has 3'-5' exoribonuclease activity on mismatched deoxyribonucleotides at the 3' termini of nicked or gapped DNA molecules during short-patch BER. Possesses DNA 3' phosphodiesterase activity capable of removing lesions (such as phosphoglycolate) blocking the 3' side of DNA strand breaks. May also play a role in the epigenetic regulation of gene expression by participating in DNA demethylation. Acts as a loading factor for POLB onto non-incised AP sites in DNA and stimulates the 5'-terminal deoxyribose 5'-phosphate (dRp) excision activity of POLB. Plays a role in the protection from granzyme-mediated cellular repair leading to cell death. Also involved in the DNA cleavage step of class switch recombination (CSR). On the other hand, APEX1 also exerts reversible nuclear redox activity to regulate DNA binding affinity and transcriptional activity of transcriptional factors by controlling the redox status of their DNA-binding domain, such as the FOS/JUN AP-1 complex after exposure to IR. Involved in calcium-dependent down-regulation of parathyroid hormone (PTH) expression by binding to negative calcium response elements (nCaREs). Together with HNRNPL or the dimer XRCC5/XRCC6, associates with nCaRE, acting as an activator of transcriptional repression. Stimulates the YBX1-mediated MDR1 promoter activity, when acetylated at Lys-6 and Lys-7, leading to drug resistance. Also acts as an endoribonuclease involved in the control of single-stranded RNA metabolism. Plays a role in regulating MYC mRNA turnover by preferentially cleaving in between UA and CA dinucleotides of the MYC coding region determinant (CRD). In association with NMD1, plays a role in the rRNA quality control process during cell cycle progression. Associates, together with YBX1, on the MDR1 promoter. Together with NPM1, associates with rRNA. Binds DNA and RNA. The chain is DNA repair nuclease/redox regulator APEX1 (APEX1) from Bos taurus (Bovine).